Here is a 210-residue protein sequence, read N- to C-terminus: Na(+)-translocating NADH-quinone reductase subunit D (210 aa).

6 helical membrane-spanning segments follow: residues 14-34 (PIVN…ALAV), 42-62 (LVMA…ISMI), 72-92 (IIVQ…LLQA), 103-123 (VFVG…AYAM), 131-151 (FMDG…VGFV), and 178-198 (NGLL…IWII).

This sequence belongs to the NqrDE/RnfAE family. Composed of six subunits; NqrA, NqrB, NqrC, NqrD, NqrE and NqrF.

The protein resides in the cell inner membrane. The enzyme catalyses a ubiquinone + n Na(+)(in) + NADH + H(+) = a ubiquinol + n Na(+)(out) + NAD(+). NQR complex catalyzes the reduction of ubiquinone-1 to ubiquinol by two successive reactions, coupled with the transport of Na(+) ions from the cytoplasm to the periplasm. NqrA to NqrE are probably involved in the second step, the conversion of ubisemiquinone to ubiquinol. This is Na(+)-translocating NADH-quinone reductase subunit D from Shewanella oneidensis (strain ATCC 700550 / JCM 31522 / CIP 106686 / LMG 19005 / NCIMB 14063 / MR-1).